The chain runs to 465 residues: 5'-adenylylsulfate reductase 1, chloroplastic (465 aa).

The transit peptide at M1 to R53 directs the protein to the chloroplast. The tract at residues L73–G327 is reductase domain. Residues S344–R465 enclose the Thioredoxin domain. Catalysis depends on nucleophile residues C385 and C388. A disulfide bridge links C385 with C388.

The protein belongs to the APS reductase family. It depends on [4Fe-4S] cluster as a cofactor. As to expression, leaves, roots and stem.

Its subcellular location is the plastid. The protein resides in the chloroplast. The catalysed reaction is glutathione disulfide + sulfite + AMP + 2 H(+) = adenosine 5'-phosphosulfate + 2 glutathione. Stimulated by sodium sulfate &gt; ammonium sulfate and is sensitive to inactivation by 5'AMP. Its function is as follows. Reduces sulfate for Cys biosynthesis. Substrate preference is adenosine-5'-phosphosulfate (APS) &gt;&gt; 3'-phosphoadenosine-5'-phosphosulfate (PAPS). Uses glutathione or DTT as source of protons. The chain is 5'-adenylylsulfate reductase 1, chloroplastic (APR1) from Arabidopsis thaliana (Mouse-ear cress).